The primary structure comprises 559 residues: CTP synthase (559 aa).

The tract at residues 1 to 270 (MTKFVFVTGG…DGLICDKLRL (270 aa)) is amidoligase domain. Ser13 is a binding site for CTP. UTP is bound at residue Ser13. ATP contacts are provided by residues 14–19 (SLGKGI) and Asp71. Mg(2+) is bound by residues Asp71 and Glu144. CTP contacts are provided by residues 151 to 153 (DIE), 191 to 196 (KTKPTQ), and Lys227. UTP-binding positions include 191 to 196 (KTKPTQ) and Lys227. A Glutamine amidotransferase type-1 domain is found at 295 to 548 (TIAMVGKYVD…IKAAIDHQKS (254 aa)). Position 357 (Gly357) interacts with L-glutamine. The Nucleophile; for glutamine hydrolysis role is filled by Cys384. Residues 385-388 (LGMQ), Glu408, and Arg474 each bind L-glutamine. Residues His521 and Glu523 contribute to the active site.

The protein belongs to the CTP synthase family. In terms of assembly, homotetramer.

The enzyme catalyses UTP + L-glutamine + ATP + H2O = CTP + L-glutamate + ADP + phosphate + 2 H(+). It catalyses the reaction L-glutamine + H2O = L-glutamate + NH4(+). It carries out the reaction UTP + NH4(+) + ATP = CTP + ADP + phosphate + 2 H(+). It functions in the pathway pyrimidine metabolism; CTP biosynthesis via de novo pathway; CTP from UDP: step 2/2. With respect to regulation, allosterically activated by GTP, when glutamine is the substrate; GTP has no effect on the reaction when ammonia is the substrate. The allosteric effector GTP functions by stabilizing the protein conformation that binds the tetrahedral intermediate(s) formed during glutamine hydrolysis. Inhibited by the product CTP, via allosteric rather than competitive inhibition. In terms of biological role, catalyzes the ATP-dependent amination of UTP to CTP with either L-glutamine or ammonia as the source of nitrogen. Regulates intracellular CTP levels through interactions with the four ribonucleotide triphosphates. The sequence is that of CTP synthase from Paracidovorax citrulli (strain AAC00-1) (Acidovorax citrulli).